The following is a 417-amino-acid chain: Imidazolonepropionase (417 aa).

H77 and H79 together coordinate Fe(3+). H77 and H79 together coordinate Zn(2+). 4-imidazolone-5-propanoate contacts are provided by R86, Y149, and H182. Y149 serves as a coordination point for N-formimidoyl-L-glutamate. Position 247 (H247) interacts with Fe(3+). A Zn(2+)-binding site is contributed by H247. A 4-imidazolone-5-propanoate-binding site is contributed by Q250. D322 contacts Fe(3+). A Zn(2+)-binding site is contributed by D322. N324 and G326 together coordinate N-formimidoyl-L-glutamate. T327 serves as a coordination point for 4-imidazolone-5-propanoate.

This sequence belongs to the metallo-dependent hydrolases superfamily. HutI family. Requires Zn(2+) as cofactor. It depends on Fe(3+) as a cofactor.

It is found in the cytoplasm. The enzyme catalyses 4-imidazolone-5-propanoate + H2O = N-formimidoyl-L-glutamate. The protein operates within amino-acid degradation; L-histidine degradation into L-glutamate; N-formimidoyl-L-glutamate from L-histidine: step 3/3. Its function is as follows. Catalyzes the hydrolytic cleavage of the carbon-nitrogen bond in imidazolone-5-propanoate to yield N-formimidoyl-L-glutamate. It is the third step in the universal histidine degradation pathway. The protein is Imidazolonepropionase of Cupriavidus taiwanensis (strain DSM 17343 / BCRC 17206 / CCUG 44338 / CIP 107171 / LMG 19424 / R1) (Ralstonia taiwanensis (strain LMG 19424)).